The chain runs to 234 residues: Large ribosomal subunit protein uL1 (234 aa).

It belongs to the universal ribosomal protein uL1 family. As to quaternary structure, part of the 50S ribosomal subunit.

In terms of biological role, binds directly to 23S rRNA. The L1 stalk is quite mobile in the ribosome, and is involved in E site tRNA release. Functionally, protein L1 is also a translational repressor protein, it controls the translation of the L11 operon by binding to its mRNA. This is Large ribosomal subunit protein uL1 from Salmonella arizonae (strain ATCC BAA-731 / CDC346-86 / RSK2980).